Consider the following 653-residue polypeptide: Leucine-rich repeat-containing protein 4 (653 aa).

A signal peptide spans 1-38 (MKLLWQVTVHHHTWNAILLPFVYLTAQVWILCAAIAAA). In terms of domain architecture, LRRNT spans 39–75 (ASAGPQNCPSVCSCSNQFSKVVCTRRGLSEVPQGIPS). Residues 39-527 (ASAGPQNCPS…SLDEVMKTTK (489 aa)) lie on the Extracellular side of the membrane. Disulfide bonds link C46–C52 and C50–C61. LRR repeat units follow at residues 76–97 (NTRY…TFRH), 100–121 (HLEV…AFNG), 124–145 (SLNT…AFEY), 148–169 (KLRE…AFNR), 172–194 (SLMR…AFEG), 197–218 (NLKY…TPLV), 219–240 (GLEE…SFHG), 243–264 (SLKK…AFDG), and 267–288 (SLVE…LFTP). N277, N322, N363, N388, N410, N434, N440, N447, and N450 each carry an N-linked (GlcNAc...) asparagine glycan. One can recognise an LRRCT domain in the interval 300 to 352 (NPWNCDCDILWLAWWLREYIPTNSTCCGRCHAPMHMRGRYLVEVDQASFQCSA). Disulfide bonds link C304/C329 and C306/C350. The Ig-like domain occupies 353–442 (PFIMDAPRDL…SNASAYLNVS (90 aa)). A disulfide bridge links C374 with C424. The chain crosses the membrane as a helical span at residues 528-548 (IIIGCFVAVTLLAAAMLIVFY). Topologically, residues 549 to 653 (KLRKRHQQRS…TKDKVQETQI (105 aa)) are cytoplasmic.

In terms of assembly, interacts with DLG4. Interacts (via LRR repeats) with NTNG2. Forms a complex with DLG4 and with NMDA receptors. Post-translationally, N-glycosylated. As to expression, specifically expressed in brain.

The protein resides in the membrane. The protein localises to the postsynaptic cell membrane. In terms of biological role, synaptic adhesion protein. Regulates the formation of exitatory synapses through the recruitment of pre-and-postsynaptic proteins. Organize the lamina/pathway-specific differentiation of dendrites. Plays an important role for auditory synaptic responses. Involved in the suppression of glioma. This is Leucine-rich repeat-containing protein 4 (LRRC4) from Homo sapiens (Human).